The following is a 112-amino-acid chain: uncharacterized protein (112 aa).

Transmembrane regions (helical) follow at residues 7–26 and 36–58; these read PSFH…TLDY and TYMH…FFLY.

Its subcellular location is the membrane. This is an uncharacterized protein from Saccharomyces cerevisiae (strain ATCC 204508 / S288c) (Baker's yeast).